Here is a 252-residue protein sequence, read N- to C-terminus: MVEVRNVSKQYGGKVVLEETSVTIQKGKITSFIGPNGAGKSTLLSIMSRLIKKDSGEIYIDGQEIGACDSKELAKKMSILKQANQINIRLTIKDLVSFGRFPYSQGRLTEEDWVHINQALSYMKLEDIQDKYLDQLSGGQCQRAFIAMVIAQDTDYIFLDEPLNNLDMKHSVEIMKLLKRLVEELGKTIVIVIHDINFASVYSDYIVALKNGRIVKEGPPEEMIETSVLEEIYDMTIPIQTIDNQRIGVYFS.

Residues 2 to 236 enclose the ABC transporter domain; that stretch reads VEVRNVSKQY…SVLEEIYDMT (235 aa). 34–41 serves as a coordination point for ATP; the sequence is GPNGAGKS.

Belongs to the ABC transporter superfamily. As to quaternary structure, the complex is composed of two ATP-binding proteins (YclP), two transmembrane proteins (YclN and YclO) and a solute-binding protein (YclQ).

The protein resides in the cell membrane. The enzyme catalyses a Fe(III)-siderophore(out) + ATP + H2O = a Fe(III)-siderophore(in) + ADP + phosphate + H(+). In terms of biological role, part of the ABC transporter complex YclNOPQ involved in uptake of ferric-petrobactin. Petrobactin is a photoreactive 3,4-catecholate siderophore produced by many members of the B.cereus group, including B.anthracis. Probably responsible for energy coupling to the transport system. The polypeptide is Petrobactin import ATP-binding protein YclP (yclP) (Bacillus subtilis (strain 168)).